A 523-amino-acid chain; its full sequence is MLSVDLPSVANLDPRIAAAAAGSAVAVYKLLQLGSRESFLPPGPPTRPVLGNAHLMTKMWLPMQLTEWAREYGEVYSLKLMNRTVIVLNSPKAVRTILDKQGNITGDRPFSPMISRYTEGLNLTVESMDTSVWKTGRKGIHNYLTPSALSGYVPRQEEESVNLMHDLLMDAPNRPIHIRRAMMSLLLHIVYGQPRCESYYGTVIENAYEAATRIGQIAHNGAAVDAFPFLDYIPRGFPGAGWKTIVDEFKDFRNSVYNSLLDGAKKAMDSGIRTGCFAESVIDHPDGRSWLELSNLSGGFLDAGAKTTISYIESCILALIAHPDCQRKIQDELDHVLGTETMPCFDDLERLPYLKAFLQEVLRLRPVGPVALPHVSRENLSYGGHVLPEGSMIFMNIWGMGHDPELFDEPEAFKPERYLLTSNGTKPGLSEDVNPDFLFGAGRRVCPGDKLAKRSTGLFIMRLCWAFNFYPDSSNKDTVKNMNMEDCYDKSVSLETLPLPFACKIEPRDKMKEDLIKEAFAAL.

Residues 16–33 (IAAAAAGSAVAVYKLLQL) traverse the membrane as a helical segment. 6 N-linked (GlcNAc...) asparagine glycosylation sites follow: Asn-82, Asn-103, Asn-122, Asn-295, Asn-379, and Asn-423. Cys-446 lines the heme pocket.

This sequence belongs to the cytochrome P450 family. Requires heme as cofactor.

It localises to the membrane. Its pathway is secondary metabolite biosynthesis; terpenoid biosynthesis. In terms of biological role, cytochrome P450 monooxygenase; part of the gene cluster that mediates the biosynthesis of pleuromutilin, a tricyclic diterpene showing antibacterial properties. The geranylgeranyl diphosphate (GGPP) synthase ple4 catalyzes the first step in pleuromutilin biosynthesis. GGPP is then substrate of the premutilin synthase (PS) ple3 to yield premutilin. Premutilin synthase is a bifunctional enzyme composed of the fusion of a class II diterpene cyclase (DTC) and a class I diterpene synthase (DTS), with the corresponding domains and active sites containing characteristic aspartate-rich motifs. GGPP is first converted to mutildienyl-diphosphate (MPP) at the class II DTC site. MPP is subsequently further cyclized at the class I DTS site, followed by a 1,5-hydride shift and addition of water prior to terminating deprotonation, to yield premutilin. The cytochrome P450 monooxygenases ple5 and ple6 hydroxylate premutilin at C-11 and C-3, respectively, producing 11-hydroxypremutilin and 3-hydroxypremutilin. The combination of the actions of both ple5 and ple6 leads to the production of 3,11-dihydroxypremutilin. The short chain dehydrogenase ple7 further converts 3,11-dihydroxypremutilin into mutilin. The acetyltransferase ple2 then acetylates mutilin to produce 14-O-acetylmutilin. Finally, the cytochrome P450 monooxygenase ple1 catalyzes hydroxylation on the alpha position of the acetyl side chain of 14-O-acetylmutilin to yield pleuromutilin. The sequence is that of Cytochrome P450 monooxygenase ple5B from Rhodocybe pseudopiperita (Clitopilus pseudopiperitus).